We begin with the raw amino-acid sequence, 115 residues long: NADH-ubiquinone oxidoreductase chain 3 (115 aa).

A run of 3 helical transmembrane segments spans residues 5–25 (TALL…FWFF), 55–75 (FFLV…LLPL), and 86–106 (IMML…AYEW).

The protein belongs to the complex I subunit 3 family. Core subunit of respiratory chain NADH dehydrogenase (Complex I) which is composed of 45 different subunits. Interacts with TMEM186. Interacts with TMEM242.

Its subcellular location is the mitochondrion inner membrane. The catalysed reaction is a ubiquinone + NADH + 5 H(+)(in) = a ubiquinol + NAD(+) + 4 H(+)(out). In terms of biological role, core subunit of the mitochondrial membrane respiratory chain NADH dehydrogenase (Complex I) which catalyzes electron transfer from NADH through the respiratory chain, using ubiquinone as an electron acceptor. Essential for the catalytic activity of complex I. In Peromyscus sejugis (Santa Cruz mouse), this protein is NADH-ubiquinone oxidoreductase chain 3.